We begin with the raw amino-acid sequence, 502 residues long: Ribose import ATP-binding protein RbsA (502 aa).

ABC transporter domains are found at residues 6–242 (IDMT…IARD) and 253–496 (ALGA…SGAR). ATP is bound at residue 38–45 (GQNGAGKS).

This sequence belongs to the ABC transporter superfamily. Ribose importer (TC 3.A.1.2.1) family. As to quaternary structure, the complex is composed of an ATP-binding protein (RbsA), two transmembrane proteins (RbsC) and a solute-binding protein (RbsB).

The protein localises to the cell inner membrane. It catalyses the reaction D-ribose(out) + ATP + H2O = D-ribose(in) + ADP + phosphate + H(+). Its function is as follows. Part of the ABC transporter complex RbsABC involved in ribose import. Responsible for energy coupling to the transport system. The sequence is that of Ribose import ATP-binding protein RbsA from Cereibacter sphaeroides (strain ATCC 17023 / DSM 158 / JCM 6121 / CCUG 31486 / LMG 2827 / NBRC 12203 / NCIMB 8253 / ATH 2.4.1.) (Rhodobacter sphaeroides).